Reading from the N-terminus, the 172-residue chain is Biogenesis of lysosome-related organelles complex 1 subunit 6 (172 aa).

A compositionally biased stretch (pro residues) spans 1–10 (MSVPEPPPPD). Disordered stretches follow at residues 1–37 (MSVP…PDEG) and 141–172 (QKRQ…AKRT). Positions 63-167 (DLQRSKRALQ…FEREKQLTAK (105 aa)) form a coiled coil. The span at 143 to 164 (RQREELEREQQREKEFEREKQL) shows a compositional bias: basic and acidic residues.

This sequence belongs to the BLOC1S6 family. In terms of assembly, octamer composed of one copy each BLOC1S1, BLOC1S2, BLOC1S3, BLOC1S4, BLOC1S5, BLOC1S6, DTNBP1/BLOC1S7 and SNAPIN/BLOC1S8. Interacts with SNAP47. Homodimer. Component of the biogenesis of lysosome-related organelles complex 1 (BLOC-1) composed of BLOC1S1, BLOC1S2, BLOC1S3, BLOC1S4, BLOC1S5, BLOC1S6, DTNBP1/BLOC1S7 and SNAPIN/BLOC1S8. Interacts with BLOC1S4, BLOC1S5, DTNBP1/BLOC1S7, F-actin, SNAP25 isoform 1 and STX12. In terms of processing, phosphorylated. As to expression, expressed in liver, kidney and spleen (at protein level). Ubiquitously expressed, with the highest expression levels observed in brain, heart, liver and kidney.

The protein resides in the cytoplasm. Its subcellular location is the membrane. Its function is as follows. Component of the BLOC-1 complex, a complex that is required for normal biogenesis of lysosome-related organelles (LRO), such as platelet dense granules and melanosomes. In concert with the AP-3 complex, the BLOC-1 complex is required to target membrane protein cargos into vesicles assembled at cell bodies for delivery into neurites and nerve terminals. The BLOC-1 complex, in association with SNARE proteins, is also proposed to be involved in neurite extension. May play a role in intracellular vesicle trafficking, particularly in the vesicle-docking and fusion process. The protein is Biogenesis of lysosome-related organelles complex 1 subunit 6 (Bloc1s6) of Mus musculus (Mouse).